The sequence spans 297 residues: Bifonsecin B biosynthesis cluster protein A (297 aa).

The N-terminal stretch at 1 to 20 is a signal peptide; that stretch reads MHFWWTAISAGLLCLPQALG. 7 N-linked (GlcNAc...) asparagine glycosylation sites follow: asparagine 26, asparagine 56, asparagine 75, asparagine 124, asparagine 175, asparagine 210, and asparagine 280.

Belongs to the bfoA family.

Functionally, part of the gene cluster that mediates the biosynthesis of bifonsecin B, a dimeric gamma-naphthopyrone. The first step in the biosynthesis of bifonsecin B is the production of gamma-naphthopyrone precursor YWA1 by the non-reducing polyketide synthase albA, via condensation of one acetyl-CoA starter unit with 6 malonyl-CoA units. YWA1 is then methylated by bfoE at position C-6 to yield foncesin which is further methylated at position C-8 by bfoD to produce fonsecin B. A key enzyme in the biosynthetic pathway is the cytochrome P450 monooxygenase bfoB which catalyzes the oxidative dimerization of fonsecin B to bifonsecin B. Bfob also catalyzes the oxidative dimerization of rubrofusarin B into nigerone. The stereoselectivity of bfoB is influenced by the two natural monomeric substrates; homodimerization of fonsecin B yields a stereochemically pure biaryl, M-foncerine B, while rubrofusarin B yields a mixture of enantiomers M- and P-nigerone. The function of bfoA within the bifonsecin B biosynthesis pathway has not been determined yet. The polypeptide is Bifonsecin B biosynthesis cluster protein A (Aspergillus brasiliensis (strain CBS 101740 / IMI 381727 / IBT 21946)).